Here is a 294-residue protein sequence, read N- to C-terminus: Ribosomal RNA small subunit methyltransferase H (294 aa).

Residues 36–38 (GGH), Asp-55, Phe-82, Asp-97, and Gln-104 each bind S-adenosyl-L-methionine.

Belongs to the methyltransferase superfamily. RsmH family.

It localises to the cytoplasm. It carries out the reaction cytidine(1402) in 16S rRNA + S-adenosyl-L-methionine = N(4)-methylcytidine(1402) in 16S rRNA + S-adenosyl-L-homocysteine + H(+). In terms of biological role, specifically methylates the N4 position of cytidine in position 1402 (C1402) of 16S rRNA. This chain is Ribosomal RNA small subunit methyltransferase H, found in Synechococcus sp. (strain CC9605).